We begin with the raw amino-acid sequence, 103 residues long: Auxin-responsive protein SAUR50 (103 aa).

Belongs to the ARG7 family.

In terms of biological role, effector of hormonal and environmental signals in plant growth. Involved in heliotropism. The protein is Auxin-responsive protein SAUR50 of Helianthus annuus (Common sunflower).